We begin with the raw amino-acid sequence, 867 residues long: cGMP-dependent 3',5'-cGMP phosphodiesterase A (867 aa).

Over residues 121–146 (IINSSSSTTDTSKTSPIKKQTSSSSP) the composition is skewed to low complexity. Disordered regions lie at residues 121 to 167 (IINS…SQQQ) and 180 to 241 (HHHH…STFP). The span at 147–160 (PLSPQQQQPPPPLV) shows a compositional bias: pro residues. A compositionally biased stretch (low complexity) spans 191 to 220 (NDNNNNTTTNNNNIEILEQQQQQQQQQQQQ). A compositionally biased stretch (acidic residues) spans 221–232 (QDEDSTDVDEEF). Positions 357 to 503 (STTGFVLWIN…GDTCYDPNRI (147 aa)) are phosphodiesterase activity. Positions 399, 401, and 403 each coordinate a divalent metal cation. Residues 607 to 721 (IFRS…WEMR) and 734 to 851 (VFSR…IFVD) contribute to the a nucleoside 3',5'-cyclic phosphate site.

It belongs to the metallo-beta-lactamase superfamily. cNMP phosphodiesterase family. It depends on Mn(2+) as a cofactor. Mg(2+) is required as a cofactor. Requires Zn(2+) as cofactor.

The protein resides in the cytoplasm. It is found in the cytosol. It carries out the reaction 3',5'-cyclic GMP + H2O = GMP + H(+). Phosphodiesterase specific for cGMP, which is activated by cGMP but not by cAMP. Involved in the degradation of intracellular cGMP, contributes to the control of cGMP signals. This Dictyostelium discoideum (Social amoeba) protein is cGMP-dependent 3',5'-cGMP phosphodiesterase A (pdeD).